The primary structure comprises 308 residues: Cell division protein FtsQ (308 aa).

Residues 1–53 lie on the Cytoplasmic side of the membrane; the sequence is MDSGGRIVYALNVEKTGFLRILSVTVLQRLYRRVFWFLFKCVAGIDVPRHAGS. Residues 54–74 traverse the membrane as a helical segment; the sequence is LAVFSFFFLSILYSISSGGYM. The Periplasmic segment spans residues 75-308; sequence NHFMKVAISN…LLKMLKAGSV (234 aa). Residues 87-155 enclose the POTRA domain; the sequence is FLVTHVDMSG…DRLRISLVER (69 aa).

The protein belongs to the FtsQ/DivIB family. FtsQ subfamily.

Its subcellular location is the cell inner membrane. In terms of biological role, essential cell division protein. The protein is Cell division protein FtsQ of Bartonella bacilliformis.